Consider the following 144-residue polypeptide: Large ribosomal subunit protein uL15 (144 aa).

Residues 1 to 48 (MRLNTLSPAAGSKSAAKRVGRGIGSGTGKTCGRGHKGQKSRSGGGVRI) form a disordered region. A compositionally biased stretch (gly residues) spans 21–31 (RGIGSGTGKTC).

This sequence belongs to the universal ribosomal protein uL15 family. In terms of assembly, part of the 50S ribosomal subunit.

Functionally, binds to the 23S rRNA. This is Large ribosomal subunit protein uL15 from Shewanella woodyi (strain ATCC 51908 / MS32).